A 76-amino-acid chain; its full sequence is Theta defensin subunit A (76 aa).

The signal sequence occupies residues 1-22; the sequence is MRTFALLTAMLLLVALHAQAEA. The propeptide occupies 23 to 64; the sequence is RQARADEAAAQQQPGADDQGMAHSFTWPENAALPLSESAKGL. Positions 25 to 45 are disordered; it reads ARADEAAAQQQPGADDQGMAH. The segment covering 30-44 has biased composition (low complexity); sequence AAAQQQPGADDQGMA. Arg65 is covalently cross-linked (Cyclopeptide (Arg-Cys) (interchain with C-73 in subunit A); in form BTD-3). Arg65 participates in a covalent cross-link: Cyclopeptide (Arg-Cys) (interchain with C-73 in subunit B); in form BTD-1. Arg65 is covalently cross-linked (Cyclopeptide (Arg-Cys) (interchain with C-73 in subunit C); in form BTD-4). Residue Arg65 forms a Cyclopeptide (Arg-Cys) (interchain with C-73 in subunit D); in form BTD-7 linkage. Residues Cys68 and Cys73 are joined by a disulfide bond. Cys73 participates in a covalent cross-link: Cyclopeptide (Cys-Arg) (interchain with R-65 in subunit A); in form BTD-3. A Cyclopeptide (Cys-Arg) (interchain with R-65 in subunit B); in form BTD-1 cross-link involves residue Cys73. Residue Cys73 forms a Cyclopeptide (Cys-Arg) (interchain with R-65 in subunit C); in form BTD-4 linkage. A Cyclopeptide (Cys-Arg) (interchain with R-65 in subunit D); in form BTD-7 cross-link involves residue Cys73. Residues 74–76 constitute a propeptide that is removed on maturation; the sequence is RLL.

This sequence belongs to the alpha-defensin family. Theta subfamily. In terms of assembly, BTD-1 is a cyclic heterodimer composed of subunits A and B; disulfide-linked. BTD-3 is a cyclic homodimer composed of two subunits A; disulfide-linked. BTD-4 is a cyclic heterodimer composed of subunits A and C; disulfide-linked. BTD-7 is a cyclic heterodimer composed of subunits A and D; disulfide-linked. Post-translationally, forms a cyclic peptide with subunit B (BTD-1), subunit A (BTD-3), subunit C (BTD-4), or subunit D (BTD-7). An additional intersubunit disulfide bond is formed.

Functionally, BTD-1, BTD-3, BTD-4 and BTD-7 have antimicrobial activity against the Gram-negative bacterium E.coli ML35, the Gram-positive bacterium S.aureus 502a, and the fungus C.albicans 16820. BTD-3 is more effective against E.coli than BTD-1, BTD-4 and BTD-7. The protein is Theta defensin subunit A (BTDA) of Papio anubis (Olive baboon).